Consider the following 421-residue polypeptide: MVRTRIQRLLTGINRRMMKLLIALALIAYVASVWGNFVNMSKSIQENGEQKMEKKIEEVIAPLREKIQNLERSFTQKYPPVKFLSEKDRKRILITGGAGFVGSHLTDKLMMDGHEVTVVDNFFTGRKRNVEHWIGHENFELINHDVVEPLYIEVDQIYHLASPASPPNYMYNPIKTLKTNTIGTLNMLGLAKRVGARLLLASTSEVYGDPEVHPQSEEYWGHVNPIGPRACYDEGKRVAETMCYAYMKQEGVEVRVARIFNTFGPRMHMNDGRVVSNFILQALQGEQLTVYGSGEQTRAFQYVSDLVNGLVALMNSNVSSPVNLGNPQEHSIVQFARLIKQLVGSGGEISFLSEAQDDPQRRKPDIRKAKLLLGWEPVVPLEEGLNKTIHYFRKELEHQANNQYIPKPKPARVKKGRTRHN.

At 1-19 the chain is on the cytoplasmic side; that stretch reads MVRTRIQRLLTGINRRMMK. A helical transmembrane segment spans residues 20-40; it reads LLIALALIAYVASVWGNFVNM. The Lumenal portion of the chain corresponds to 41–421; it reads SKSIQENGEQ…RVKKGRTRHN (381 aa). The NAD(+) site is built by glycine 99, phenylalanine 100, valine 101, aspartate 120, asparagine 121, phenylalanine 123, threonine 124, glycine 125, aspartate 145, and valine 146. Positions 150 and 151 each coordinate UDP-alpha-D-glucuronate. Leucine 160 and serine 162 together coordinate NAD(+). Lysine 178 lines the UDP-alpha-D-glucuronate pocket. Threonine 179 is a binding site for NAD(+). The UDP-alpha-D-glucuronate site is built by asparagine 186, glycine 189, lysine 192, and arginine 193. The NAD(+) site is built by alanine 201, tyrosine 232, and lysine 236. Tyrosine 232 functions as the Proton acceptor in the catalytic mechanism. Residues tyrosine 246, glutamine 249, and glutamate 250 each contribute to the UDP-alpha-D-glucuronate site. NAD(+) is bound by residues threonine 262, histidine 268, and arginine 273. Residues asparagine 317 and asparagine 386 are each glycosylated (N-linked (GlcNAc...) asparagine). Positions 400–421 are disordered; it reads ANNQYIPKPKPARVKKGRTRHN. A compositionally biased stretch (basic residues) spans 409-421; it reads KPARVKKGRTRHN.

It belongs to the NAD(P)-dependent epimerase/dehydratase family. UDP-glucuronic acid decarboxylase subfamily. In terms of assembly, homodimer and homotetramer. The cofactor is NAD(+).

The protein localises to the golgi apparatus. It localises to the golgi stack membrane. The enzyme catalyses UDP-alpha-D-glucuronate + H(+) = UDP-alpha-D-xylose + CO2. The protein operates within nucleotide-sugar biosynthesis; UDP-alpha-D-xylose biosynthesis; UDP-alpha-D-xylose from UDP-alpha-D-glucuronate: step 1/1. Catalyzes the NAD-dependent decarboxylation of UDP-glucuronic acid to UDP-xylose. Necessary for the biosynthesis of the core tetrasaccharide in glycosaminoglycan biosynthesis. The polypeptide is UDP-glucuronic acid decarboxylase 1 (uxs1) (Xenopus tropicalis (Western clawed frog)).